Consider the following 880-residue polypeptide: MLLIHIRSTRKILALGRHVFPSNAFFSVSSRPSLSSSDEVAAHDVASLLKTPNWEKNSSLKSLVSHMNPNVASQVISLQRSDNDICVRFFMWVCKHSSYCFDPTQKNQLLKLIVSSGLYRVAHAVIVALIKECSRCEKEMLKLMYCFDELREVFGFRLNYPCYSSLLMSLAKLDLGFLAYVTYRRMEADGFVVGMIDYRTIVNALCKNGYTEAAEMFMSKILKIGFVLDSHIGTSLLLGFCRGLNLRDALKVFDVMSKEVTCAPNSVSYSILIHGLCEVGRLEEAFGLKDQMGEKGCQPSTRTYTVLIKALCDRGLIDKAFNLFDEMIPRGCKPNVHTYTVLIDGLCRDGKIEEANGVCRKMVKDRIFPSVITYNALINGYCKDGRVVPAFELLTVMEKRACKPNVRTFNELMEGLCRVGKPYKAVHLLKRMLDNGLSPDIVSYNVLIDGLCREGHMNTAYKLLSSMNCFDIEPDCLTFTAIINAFCKQGKADVASAFLGLMLRKGISLDEVTGTTLIDGVCKVGKTRDALFILETLVKMRILTTPHSLNVILDMLSKGCKVKEELAMLGKINKLGLVPSVVTYTTLVDGLIRSGDITGSFRILELMKLSGCLPNVYPYTIIINGLCQFGRVEEAEKLLSAMQDSGVSPNHVTYTVMVKGYVNNGKLDRALETVRAMVERGYELNDRIYSSLLQGFVLSQKGIDNSEESTVSDIALRETDPECINELISVVEQLGGCISGLCIFLVTRLCKEGRTDESNDLVQNVLERGVFLEKAMDIIMESYCSKKKHTKCMELITLVLKSGFVPSFKSFCLVIQGLKKEGDAERARELVMELLTSNGVVEKSGVLTYVECLMEGDETGDCSEVIDLVDQLHCRERPTF.

The N-terminal 89 residues, 1 to 89 (MLLIHIRSTR…RSDNDICVRF (89 aa)), are a transit peptide targeting the mitochondrion. 19 PPR repeats span residues 159–193 (NYPC…GFVV), 194–228 (GMID…GFVL), 229–259 (DSHI…MSKE), 265–299 (NSVS…GCQP), 300–334 (STRT…GCKP), 335–369 (NVHT…RIFP), 370–404 (SVIT…ACKP), 405–439 (NVRT…GLSP), 440–474 (DIVS…DIEP), 475–509 (DCLT…GISL), 510–544 (DEVT…RILT), 545–579 (TPHS…GLVP), 580–614 (SVVT…GCLP), 615–649 (NVYP…GVSP), 650–684 (NHVT…GYEL), 685–721 (NDRI…ETDP), 738–768 (ISGL…VLER), 772–806 (LEKA…GFVP), and 807–842 (SFKS…GVVE).

Belongs to the PPR family. P subfamily.

It is found in the mitochondrion. In Arabidopsis thaliana (Mouse-ear cress), this protein is Pentatricopeptide repeat-containing protein At3g07290, mitochondrial.